The sequence spans 273 residues: 4-hydroxy-tetrahydrodipicolinate reductase (273 aa).

NAD(+) is bound at residue 12–17 (GSGGRM). Arg-39 is a binding site for NADP(+). Residues 102–104 (GTT) and 126–129 (AANF) each bind NAD(+). His-159 (proton donor/acceptor) is an active-site residue. His-160 provides a ligand contact to (S)-2,3,4,5-tetrahydrodipicolinate. The active-site Proton donor is the Lys-163. 169-170 (GT) provides a ligand contact to (S)-2,3,4,5-tetrahydrodipicolinate.

This sequence belongs to the DapB family. In terms of assembly, homotetramer.

It localises to the cytoplasm. It catalyses the reaction (S)-2,3,4,5-tetrahydrodipicolinate + NAD(+) + H2O = (2S,4S)-4-hydroxy-2,3,4,5-tetrahydrodipicolinate + NADH + H(+). The enzyme catalyses (S)-2,3,4,5-tetrahydrodipicolinate + NADP(+) + H2O = (2S,4S)-4-hydroxy-2,3,4,5-tetrahydrodipicolinate + NADPH + H(+). It participates in amino-acid biosynthesis; L-lysine biosynthesis via DAP pathway; (S)-tetrahydrodipicolinate from L-aspartate: step 4/4. Functionally, catalyzes the conversion of 4-hydroxy-tetrahydrodipicolinate (HTPA) to tetrahydrodipicolinate. The sequence is that of 4-hydroxy-tetrahydrodipicolinate reductase from Serratia proteamaculans (strain 568).